Reading from the N-terminus, the 231-residue chain is uncharacterized protein (231 aa).

Positions 1 to 17 are cleaved as a signal peptide; sequence MFGKILTTSLLIAMTFA. A disordered region spans residues 197–231; it reads KARKQQKNEGDDEETEDEQKIGSAIDGWVERQAKL.

This is an uncharacterized protein from Caenorhabditis elegans.